A 66-amino-acid chain; its full sequence is MAKGKDVRVIIILECTGCARNGLNKESRGISRYITQKNRHNTPSRLELKKFCSYCYKHTIHAEIKK.

The protein belongs to the bacterial ribosomal protein bL33 family.

Its subcellular location is the plastid. The protein localises to the chloroplast. In Calycanthus floridus var. glaucus (Eastern sweetshrub), this protein is Large ribosomal subunit protein bL33c.